A 203-amino-acid chain; its full sequence is Ponticulin-like protein H (203 aa).

The signal sequence occupies residues 1 to 20 (MKLLNSLVLLAALCAITANG). N-linked (GlcNAc...) asparagine glycosylation is present at N58. Over residues 127 to 168 (SDSTNPTSTPSTTPSATPTVTPSTTPTVTPTVTPSTTPTVAP) the composition is skewed to low complexity. Residues 127-183 (SDSTNPTSTPSTTPSATPTVTPSTTPTVTPTVTPSTTPTVAPTVPPTTPPSTTTGSG) are disordered. S182 carries the GPI-like-anchor amidated serine lipid modification. Positions 183–203 (GSTVVASFGLIVSILLASLAL) are cleaved as a propeptide — removed in mature form.

The protein belongs to the ponticulin family. Post-translationally, the GPI-like-anchor contains a phosphoceramide group, rather than a phosphatidyl group.

It localises to the cell membrane. In terms of biological role, binds F-actin and nucleates actin assembly. This Dictyostelium discoideum (Social amoeba) protein is Ponticulin-like protein H (ponH).